The sequence spans 476 residues: Aspartyl/glutamyl-tRNA(Asn/Gln) amidotransferase subunit B (476 aa).

This sequence belongs to the GatB/GatE family. GatB subfamily. In terms of assembly, heterotrimer of A, B and C subunits.

The enzyme catalyses L-glutamyl-tRNA(Gln) + L-glutamine + ATP + H2O = L-glutaminyl-tRNA(Gln) + L-glutamate + ADP + phosphate + H(+). It catalyses the reaction L-aspartyl-tRNA(Asn) + L-glutamine + ATP + H2O = L-asparaginyl-tRNA(Asn) + L-glutamate + ADP + phosphate + 2 H(+). Functionally, allows the formation of correctly charged Asn-tRNA(Asn) or Gln-tRNA(Gln) through the transamidation of misacylated Asp-tRNA(Asn) or Glu-tRNA(Gln) in organisms which lack either or both of asparaginyl-tRNA or glutaminyl-tRNA synthetases. The reaction takes place in the presence of glutamine and ATP through an activated phospho-Asp-tRNA(Asn) or phospho-Glu-tRNA(Gln). The polypeptide is Aspartyl/glutamyl-tRNA(Asn/Gln) amidotransferase subunit B (Clostridium botulinum (strain Langeland / NCTC 10281 / Type F)).